The sequence spans 199 residues: Nucleoside triphosphate pyrophosphatase (199 aa).

Aspartate 76 functions as the Proton acceptor in the catalytic mechanism.

This sequence belongs to the Maf family. A divalent metal cation is required as a cofactor.

Its subcellular location is the cytoplasm. The catalysed reaction is a ribonucleoside 5'-triphosphate + H2O = a ribonucleoside 5'-phosphate + diphosphate + H(+). It catalyses the reaction a 2'-deoxyribonucleoside 5'-triphosphate + H2O = a 2'-deoxyribonucleoside 5'-phosphate + diphosphate + H(+). Its function is as follows. Nucleoside triphosphate pyrophosphatase. May have a dual role in cell division arrest and in preventing the incorporation of modified nucleotides into cellular nucleic acids. The protein is Nucleoside triphosphate pyrophosphatase of Roseobacter denitrificans (strain ATCC 33942 / OCh 114) (Erythrobacter sp. (strain OCh 114)).